The sequence spans 79 residues: Large ribosomal subunit protein uL29 (79 aa).

It belongs to the universal ribosomal protein uL29 family.

This Tropheryma whipplei (strain TW08/27) (Whipple's bacillus) protein is Large ribosomal subunit protein uL29.